Reading from the N-terminus, the 116-residue chain is NADH-ubiquinone oxidoreductase chain 3 (116 aa).

The next 3 helical transmembrane spans lie at 3–23, 56–76, and 85–105; these read LILAGLLIMSILSMILAMIAF, FFLVAILFLLFDLEIALLLPL, and PTLALTWTTSIIALLTLGLIH.

It belongs to the complex I subunit 3 family.

The protein resides in the mitochondrion membrane. The enzyme catalyses a ubiquinone + NADH + 5 H(+)(in) = a ubiquinol + NAD(+) + 4 H(+)(out). Its function is as follows. Core subunit of the mitochondrial membrane respiratory chain NADH dehydrogenase (Complex I) that is believed to belong to the minimal assembly required for catalysis. Complex I functions in the transfer of electrons from NADH to the respiratory chain. The immediate electron acceptor for the enzyme is believed to be ubiquinone. The polypeptide is NADH-ubiquinone oxidoreductase chain 3 (MT-ND3) (Latimeria chalumnae (Coelacanth)).